The primary structure comprises 334 residues: Cathepsin R (334 aa).

The signal sequence occupies residues Met1–Gly17. The propeptide at Val18–Ile114 is activation peptide. 2 disulfides stabilise this stretch: Cys136/Cys179 and Cys170/Cys212. Cys139 is an active-site residue. The N-linked (GlcNAc...) asparagine glycan is linked to Asn269. A disulfide bridge connects residues Cys270 and Cys323. Residues His277 and Asn301 contribute to the active site.

This sequence belongs to the peptidase C1 family. In terms of tissue distribution, placenta.

The protein localises to the lysosome. The polypeptide is Cathepsin R (Ctsr) (Mus musculus (Mouse)).